The chain runs to 677 residues: Transmembrane and coiled-coil domain-containing protein 3 (677 aa).

The N-terminal stretch at 1-22 is a signal peptide; that stretch reads MKVLGRSFFWVLFPVLPWAVQA. A coiled-coil region spans residues 124 to 204; sequence DYKDVVNMKE…EEEIEEHAFD (81 aa). 2 N-linked (GlcNAc...) asparagine glycosylation sites follow: Asn206 and Asn230. 10 consecutive transmembrane segments (helical) span residues 286–306, 317–337, 350–370, 416–436, 456–476, 498–518, 554–574, 578–598, 608–628, and 640–660; these read WLCT…GVLL, IVQV…LVGL, ISLQ…LLWG, VLLG…AVMP, ILVL…LCLV, EILI…TELL, FLAI…FVAY, VLVF…ALVL, YIKW…FVLG, and EVYL…PVLW.

It belongs to the monovalent cation:proton antiporter 2 (CPA2) transporter (TC 2.A.37) family. In terms of tissue distribution, expressed in the cornea, lens capsule and choroid-retinal pigment epithelium (at protein level).

The protein resides in the membrane. Probable Na(+)/H(+) antiporter. In Homo sapiens (Human), this protein is Transmembrane and coiled-coil domain-containing protein 3 (TMCO3).